A 132-amino-acid polypeptide reads, in one-letter code: MSTAFAAAVVKQKVEAPISPMDARIDELTDYIMKTLLWQFHSRSWDRERQNAEILKKTKELLCGEPVDLSTSHDRCYWVDAVCLADDYREHYPWINSMSKEEIGSLMQGLKDRMDYLTIHRLLNEELSDKHY.

As to quaternary structure, hexamer of two alpha, two beta, and two delta chains. Requires iron-sulfur cluster as cofactor.

It carries out the reaction N2 + 8 reduced [2Fe-2S]-[ferredoxin] + 16 ATP + 16 H2O = H2 + 8 oxidized [2Fe-2S]-[ferredoxin] + 2 NH4(+) + 16 ADP + 16 phosphate + 6 H(+). The key enzymatic reactions in nitrogen fixation are catalyzed by the nitrogenase complex, which has 2 components: the iron protein (component 2) and a component 1 which is either a molybdenum-iron protein, a vanadium-iron, or an iron-iron protein. The polypeptide is Nitrogenase iron-iron protein delta chain (anfG) (Ruminiclostridium hungatei (Clostridium hungatei)).